Consider the following 424-residue polypeptide: MLDLNFVVQNLPSVIAKLEKRQQSFAYLNKLPLLAQQRKSLLLQIQNLRSQKNQSAKKVAQKANAKEDIALFLQENNFLRDDLQKLEQKLKLQEQEIFDILSITPNLPHDSLPIGTDDKDNKELYCEGQIRTFPFTPKDHVYLAEKLDILDFKRASKISGSGFVVCKGLGARLERALIQFMMDLHSKKGYQEIIPPYIINEKSMFATGQLPKFEDEVYKLYNSKNNWYLNPTAEVPTINLHREEIFKPGTLPIKYVSYTTAFRQEAGSAGKDTRGIFRQHQFNKVELIQFCHPQNSYEYLEQMLKDSEEILKLLKLPYRVVLLSTGDLGFSMSKTYDLEVFLPSYNCYREIGSISNSCDFQARRANIKMKNPKNNKNEYVHILNGSGLAVGRTVIAILENYQNQDGTITVPEILQSYLGTDIIK.

232 to 234 is a binding site for L-serine; sequence TAE. 263–265 is an ATP binding site; that stretch reads RQE. Glu286 contributes to the L-serine binding site. 350 to 353 contributes to the ATP binding site; the sequence is EIGS. L-serine is bound at residue Ser386.

It belongs to the class-II aminoacyl-tRNA synthetase family. Type-1 seryl-tRNA synthetase subfamily. As to quaternary structure, homodimer. The tRNA molecule binds across the dimer.

Its subcellular location is the cytoplasm. It carries out the reaction tRNA(Ser) + L-serine + ATP = L-seryl-tRNA(Ser) + AMP + diphosphate + H(+). The enzyme catalyses tRNA(Sec) + L-serine + ATP = L-seryl-tRNA(Sec) + AMP + diphosphate + H(+). It participates in aminoacyl-tRNA biosynthesis; selenocysteinyl-tRNA(Sec) biosynthesis; L-seryl-tRNA(Sec) from L-serine and tRNA(Sec): step 1/1. Catalyzes the attachment of serine to tRNA(Ser). Is also able to aminoacylate tRNA(Sec) with serine, to form the misacylated tRNA L-seryl-tRNA(Sec), which will be further converted into selenocysteinyl-tRNA(Sec). The polypeptide is Serine--tRNA ligase (Aster yellows witches'-broom phytoplasma (strain AYWB)).